Here is a 586-residue protein sequence, read N- to C-terminus: Beta-fructofuranosidase, insoluble isoenzyme 3 (586 aa).

A signal peptide spans 1–26 (MATARARAALVFVALLQMAAVVVVRA). The active site involves aspartate 61. 5 N-linked (GlcNAc...) asparagine glycosylation sites follow: asparagine 154, asparagine 179, asparagine 341, asparagine 390, and asparagine 479.

It belongs to the glycosyl hydrolase 32 family.

The protein localises to the secreted. It is found in the extracellular space. The protein resides in the apoplast. It localises to the cell wall. It carries out the reaction Hydrolysis of terminal non-reducing beta-D-fructofuranoside residues in beta-D-fructofuranosides.. The sequence is that of Beta-fructofuranosidase, insoluble isoenzyme 3 (CIN3) from Oryza sativa subsp. indica (Rice).